A 436-amino-acid polypeptide reads, in one-letter code: MSAPIVAIVGRPNVGKSTIFNRMAGERIAIVEDMPGVTRDRLYAPAEWLNYEFRMIDTGGIEIGDAPFLAEIRGQVELAINEADVIVMVVSGREGLTEADEVVARMLYKSDKPVVLAVNKVDNPEMRHDVYDFYALGLGDPFPVSGSHGLGLGDLLDEIVKHFPDEAAEQEDDAIRFSIIGRPNVGKSSIVNAMLGEKRVIVSDIEGTTRDAIDTRFVTEEGDEFVMVDTAGMRKRGKIYENTEKYSVMRAMKAIDDSNVILMVIDAEAGIREQDKHVAGFAHEAGRAMIIVVNKWDAIEKNDRTMSDFENLIREEFKFLDYAPIVFVSAKTGQRLDRLPQMVKDVDDNHRKRITSSTLNDVIMDAIAINPTPSDNGRRLRVYYATQVATQPPTFVIFVNDVELMHFSYERFLENKIRESFDFTGTPIKLIVRARK.

EngA-type G domains lie at 4 to 167 (PIVA…PDEA) and 175 to 351 (IRFS…DNHR). GTP is bound by residues 10 to 17 (GRPNVGKS), 57 to 61 (DTGGI), 119 to 122 (NKVD), 181 to 188 (GRPNVGKS), 229 to 233 (DTAGM), and 294 to 297 (NKWD). In terms of domain architecture, KH-like spans 352-436 (KRITSSTLND…PIKLIVRARK (85 aa)).

Belongs to the TRAFAC class TrmE-Era-EngA-EngB-Septin-like GTPase superfamily. EngA (Der) GTPase family. In terms of assembly, associates with the 50S ribosomal subunit.

Functionally, GTPase that plays an essential role in the late steps of ribosome biogenesis. The sequence is that of GTPase Der from Leuconostoc mesenteroides subsp. mesenteroides (strain ATCC 8293 / DSM 20343 / BCRC 11652 / CCM 1803 / JCM 6124 / NCDO 523 / NBRC 100496 / NCIMB 8023 / NCTC 12954 / NRRL B-1118 / 37Y).